The chain runs to 101 residues: A-type ATP synthase subunit F (101 aa).

It belongs to the V-ATPase F subunit family. Has multiple subunits with at least A(3), B(3), C, D, E, F, H, I and proteolipid K(x).

Its subcellular location is the cell membrane. Functionally, component of the A-type ATP synthase that produces ATP from ADP in the presence of a proton gradient across the membrane. This is A-type ATP synthase subunit F from Archaeoglobus fulgidus (strain ATCC 49558 / DSM 4304 / JCM 9628 / NBRC 100126 / VC-16).